The sequence spans 324 residues: R2-like ligand binding oxidase (324 aa).

3 residues coordinate Mn(2+): glutamate 79, glutamate 112, and histidine 115. Residues 82–173 (VTEDIQPFMK…VNQVRASVTY (92 aa)) constitute a cross-link (3-(O4'-tyrosyl)-valine (Val-Tyr)). Glutamate 112 lines the Fe cation pocket. Glutamate 178, glutamate 213, and histidine 216 together coordinate Fe cation. The tract at residues 304–324 (PEALEEKFGEEDAKAMSEAAG) is disordered. Positions 307-318 (LEEKFGEEDAKA) are enriched in basic and acidic residues.

This sequence belongs to the ribonucleoside diphosphate reductase small chain family. R2-like ligand binding oxidase subfamily. As to quaternary structure, homodimer. Fe cation serves as cofactor. The cofactor is Mn(2+).

Functionally, probable oxidase. The sequence is that of R2-like ligand binding oxidase from Rhodococcus jostii (strain RHA1).